Here is a 243-residue protein sequence, read N- to C-terminus: MRYLVDTHTHTIVSGHAYTTFLENVQEASNIGLKVLGTTDHGPSMPGGPNLFYFNNFKVMPRKLKGVTLLHGCEANIIDFKGMLDIPDFTQKKLDVIIASLHDVCIRPGSVEENTEALINVMENPYVDILGHIGNPSFPINEEVVVKKAKEKNVLIEINNGSFVSRKGSEETCKKVANLCKKHKVNIIVGSDSHVCFQIGRFPKADNMLKEIGMPEELIINNEENKILKYLKNKGKLKDLNLD.

The Zn(2+) site is built by H8, H10, H16, H41, E74, H102, H132, D192, and H194.

It belongs to the PHP family. Zn(2+) serves as cofactor.

The sequence is that of Probable phosphatase CBO3379/CLC_3322 from Clostridium botulinum (strain Hall / ATCC 3502 / NCTC 13319 / Type A).